The chain runs to 674 residues: MYLSLLLLPMFGSAVTGLLGRKIGVTGAHIITCSCLITSAILAIVAFYEVGLCNSSVSINLISWIDSELMDVSWGFMFDSLTVSMLLPVLVVSSLVHIFSVDYMSADPHNQRFFAYLSMFTFFMLVLVTGDNYLIMFVGWEGIGISSYLLINFWFTRIQANKSAIKALVVNRVGDMFLSIGFFAIFFVFGNLDYSTVFSIAPFINETIITIIGLLLLLAAMGKSAQLGLHTWLPDPSMEGPTPVSALIHAATLVTAGVYLLLRSSPVIEYGPTTLIVITWVGALTAFFAASTGLLQNDLKRVIAYSTCSQMGYLFMACGLSQYNVALFHLVNHAFFKALLFLAAGAVLHATYDQQDQRRLGGLIGFLPFTYTAILIGSLSLIALPWLTGFYSKDLILEVAYGQYEFSGQVAYWLGTLSACLTAFYSLRLISLTFLTYPNASKSVYLHTHDAPTIVMIPLIILSLLAIFFGYVARDLFVGMGSDFLSPSLFTHPSHITLIEAEFGLPQIIKLLPAIGTLLGAGLALYLYHMLPVFTIDLTNSTLGQKLYRFFNGKYYVDVIYNHYIIYGGLQLGYVISKVLDRGIIELVGPYGLATGLTSGSKDIAKLDTGNLTSYALYLAIALVTLIMILLSPVLLNAALINAPLILVLLVAMVCIPYINSSSNDTVTTVQVKL.

The next 17 helical transmembrane spans lie at 27-47 (GAHIITCSCLITSAILAIVAF), 81-101 (LTVSMLLPVLVVSSLVHIFSV), 113-133 (FFAYLSMFTFFMLVLVTGDNY), 135-155 (IMFVGWEGIGISSYLLINFWF), 173-193 (VGDMFLSIGFFAIFFVFGNLD), 200-220 (IAPFINETIITIIGLLLLLAA), 242-262 (TPVSALIHAATLVTAGVYLLL), 275-295 (LIVITWVGALTAFFAASTGLL), 301-323 (RVIAYSTCSQMGYLFMACGLSQY), 325-345 (VALFHLVNHAFFKALLFLAAG), 363-383 (LIGFLPFTYTAILIGSLSLIA), 410-430 (VAYWLGTLSACLTAFYSLRLI), 453-473 (TIVMIPLIILSLLAIFFGYVA), 514-534 (AIGTLLGAGLALYLYHMLPVF), 556-576 (YVDVIYNHYIIYGGLQLGYVI), 616-636 (ALYLAIALVTLIMILLSPVLL), and 639-659 (ALINAPLILVLLVAMVCIPYI).

It belongs to the complex I subunit 5 family.

It is found in the mitochondrion inner membrane. It catalyses the reaction a ubiquinone + NADH + 5 H(+)(in) = a ubiquinol + NAD(+) + 4 H(+)(out). In terms of biological role, core subunit of the mitochondrial membrane respiratory chain NADH dehydrogenase (Complex I) that is believed to belong to the minimal assembly required for catalysis. Complex I functions in the transfer of electrons from NADH to the respiratory chain. The immediate electron acceptor for the enzyme is believed to be ubiquinone. The chain is NADH-ubiquinone oxidoreductase chain 5 (ND5) from Mycosarcoma maydis (Corn smut fungus).